Reading from the N-terminus, the 234-residue chain is Large ribosomal subunit protein bL25 (234 aa).

This sequence belongs to the bacterial ribosomal protein bL25 family. CTC subfamily. As to quaternary structure, part of the 50S ribosomal subunit; part of the 5S rRNA/L5/L18/L25 subcomplex. Contacts the 5S rRNA. Binds to the 5S rRNA independently of L5 and L18.

Its function is as follows. This is one of the proteins that binds to the 5S RNA in the ribosome where it forms part of the central protuberance. The sequence is that of Large ribosomal subunit protein bL25 from Rhodopseudomonas palustris (strain BisA53).